A 358-amino-acid chain; its full sequence is Aminodeoxyfutalosine deaminase (358 aa).

Positions 32 and 34 each coordinate Zn(2+). Residues R87, D154, and G188 each contribute to the substrate site. H215 provides a ligand contact to Zn(2+). The active-site Proton donor is the E218. D296 is a Zn(2+) binding site.

This sequence belongs to the metallo-dependent hydrolases superfamily. Adenosine and AMP deaminases family. Requires Zn(2+) as cofactor.

It catalyses the reaction 6-amino-6-deoxyfutalosine + H2O + H(+) = futalosine + NH4(+). The protein operates within quinol/quinone metabolism; menaquinone biosynthesis. In terms of biological role, catalyzes the deamination of aminodeoxyfutalosine (AFL) into futalosine (FL), a step in the biosynthesis of menaquinone (MK, vitamin K2). To a lesser extent, can also deaminate adenosine, 5'-methylthioadenosine, 5'-deoxyadenosine, and 2'-deoxyadenosine. The sequence is that of Aminodeoxyfutalosine deaminase (add2) from Streptomyces avermitilis (strain ATCC 31267 / DSM 46492 / JCM 5070 / NBRC 14893 / NCIMB 12804 / NRRL 8165 / MA-4680).